The sequence spans 437 residues: UDP-N-acetylmuramoylalanine--D-glutamate ligase (437 aa).

112–118 (GSNGKST) is a binding site for ATP.

This sequence belongs to the MurCDEF family.

The protein resides in the cytoplasm. The catalysed reaction is UDP-N-acetyl-alpha-D-muramoyl-L-alanine + D-glutamate + ATP = UDP-N-acetyl-alpha-D-muramoyl-L-alanyl-D-glutamate + ADP + phosphate + H(+). It participates in cell wall biogenesis; peptidoglycan biosynthesis. In terms of biological role, cell wall formation. Catalyzes the addition of glutamate to the nucleotide precursor UDP-N-acetylmuramoyl-L-alanine (UMA). The chain is UDP-N-acetylmuramoylalanine--D-glutamate ligase from Haemophilus influenzae (strain PittGG).